The chain runs to 358 residues: tRNA-specific 2-thiouridylase MnmA (358 aa).

ATP is bound by residues 10–17 (AMSGGVDS) and M36. The active-site Nucleophile is the C105. C105 and C202 are disulfide-bonded. G129 is an ATP binding site. An interaction with tRNA region spans residues 152-154 (KDQ). The active-site Cysteine persulfide intermediate is the C202. The interaction with tRNA stretch occupies residues 308–309 (RY).

This sequence belongs to the MnmA/TRMU family.

It is found in the cytoplasm. It carries out the reaction S-sulfanyl-L-cysteinyl-[protein] + uridine(34) in tRNA + AH2 + ATP = 2-thiouridine(34) in tRNA + L-cysteinyl-[protein] + A + AMP + diphosphate + H(+). Its function is as follows. Catalyzes the 2-thiolation of uridine at the wobble position (U34) of tRNA, leading to the formation of s(2)U34. This is tRNA-specific 2-thiouridylase MnmA from Magnetococcus marinus (strain ATCC BAA-1437 / JCM 17883 / MC-1).